Reading from the N-terminus, the 350-residue chain is Nicotinate-nucleotide--dimethylbenzimidazole phosphoribosyltransferase (350 aa).

The Proton acceptor role is filled by Glu317.

The protein belongs to the CobT family.

The catalysed reaction is 5,6-dimethylbenzimidazole + nicotinate beta-D-ribonucleotide = alpha-ribazole 5'-phosphate + nicotinate + H(+). The protein operates within nucleoside biosynthesis; alpha-ribazole biosynthesis; alpha-ribazole from 5,6-dimethylbenzimidazole: step 1/2. Catalyzes the synthesis of alpha-ribazole-5'-phosphate from nicotinate mononucleotide (NAMN) and 5,6-dimethylbenzimidazole (DMB). This chain is Nicotinate-nucleotide--dimethylbenzimidazole phosphoribosyltransferase, found in Shewanella sp. (strain W3-18-1).